The following is a 512-amino-acid chain: Anaerobic nitric oxide reductase transcription regulator NorR (512 aa).

The Sigma-54 factor interaction domain maps to 190–419 (MIGESLAMQE…LEHVISRAAV (230 aa)). ATP is bound by residues 218 to 225 (GETGVGKE) and 281 to 290 (ADNGTLFLDE). The H-T-H motif DNA-binding region spans 487–506 (WAATARALQLDTGNLHRLAK).

It participates in nitrogen metabolism; nitric oxide reduction. Its function is as follows. Required for the expression of anaerobic nitric oxide (NO) reductase, acts as a transcriptional activator for at least the norVW operon. Activation also requires sigma-54. The protein is Anaerobic nitric oxide reductase transcription regulator NorR of Aliivibrio fischeri (strain ATCC 700601 / ES114) (Vibrio fischeri).